The chain runs to 660 residues: DNA ligase (660 aa).

Residues 33-37 (DFVYD), 82-83 (SL), and glutamate 110 each bind NAD(+). Lysine 112 (N6-AMP-lysine intermediate) is an active-site residue. 4 residues coordinate NAD(+): arginine 133, glutamate 167, lysine 281, and lysine 305. 4 residues coordinate Zn(2+): cysteine 396, cysteine 399, cysteine 412, and cysteine 417. In terms of domain architecture, BRCT spans 583–660 (DENRLLAGKK…SFEDIKSYLN (78 aa)).

It belongs to the NAD-dependent DNA ligase family. LigA subfamily. The cofactor is Mg(2+). Mn(2+) serves as cofactor.

The enzyme catalyses NAD(+) + (deoxyribonucleotide)n-3'-hydroxyl + 5'-phospho-(deoxyribonucleotide)m = (deoxyribonucleotide)n+m + AMP + beta-nicotinamide D-nucleotide.. Functionally, DNA ligase that catalyzes the formation of phosphodiester linkages between 5'-phosphoryl and 3'-hydroxyl groups in double-stranded DNA using NAD as a coenzyme and as the energy source for the reaction. It is essential for DNA replication and repair of damaged DNA. In Borrelia garinii subsp. bavariensis (strain ATCC BAA-2496 / DSM 23469 / PBi) (Borreliella bavariensis), this protein is DNA ligase.